The primary structure comprises 885 residues: Cadherin-related family member 3 (885 aa).

The N-terminal stretch at 1–19 (MQEAIILLALLGAMSGGEA) is a signal peptide. Topologically, residues 20 to 713 (LHLILLPATG…VYSPSAWYVP (694 aa)) are extracellular. Cadherin domains are found at residues 23–132 (ILLP…PPQF), 136–236 (LAEG…VPRF), 237–344 (TSPT…NPAT), 346–466 (QKFT…RPSY), 462–566 (DRPS…KPIC), and 567–695 (TPNS…RPRV). N-linked (GlcNAc...) asparagine glycosylation is found at asparagine 186 and asparagine 257. The N-linked (GlcNAc...) asparagine glycan is linked to asparagine 624. A helical membrane pass occupies residues 714–734 (FVITLGSILLLGLLVYLVVLL). Topologically, residues 735 to 885 (AKAIHRHCPC…RAYPKPHPGK (151 aa)) are cytoplasmic. The interval 808–885 (MPKWKESSHQ…RAYPKPHPGK (78 aa)) is disordered.

As to quaternary structure, (Microbial infection) Interacts (via N-terminus) with human rhinovirus C capsid proteins VP1, VP2 and VP3. As to expression, expressed in bronchial epithelium from adults and in fetal lung tissue.

It localises to the cell membrane. In terms of biological role, cadherins are calcium-dependent cell adhesion proteins. They preferentially interact with themselves in a homophilic manner in connecting cells; cadherins may thus contribute to the sorting of heterogeneous cell types. (Microbial infection) Acts as a receptor for human rhinovirus C. The chain is Cadherin-related family member 3 (CDHR3) from Homo sapiens (Human).